The primary structure comprises 239 residues: UPF0126 membrane protein VC_2382 (239 aa).

The next 6 helical transmembrane spans lie at 38 to 58 (LLYL…VLLA), 62 to 82 (KMDP…GGTI), 86 to 106 (ALGA…VIMI), 122 to 142 (AWWI…GIGV), 153 to 173 (LIAI…RDVL), and 185 to 205 (VYAT…AMGY).

It belongs to the UPF0126 family.

The protein localises to the cell membrane. This is UPF0126 membrane protein VC_2382 from Vibrio cholerae serotype O1 (strain ATCC 39315 / El Tor Inaba N16961).